The primary structure comprises 431 residues: Glutamate-1-semialdehyde 2,1-aminomutase (431 aa).

The residue at position 265 (K265) is an N6-(pyridoxal phosphate)lysine.

This sequence belongs to the class-III pyridoxal-phosphate-dependent aminotransferase family. HemL subfamily. In terms of assembly, homodimer. It depends on pyridoxal 5'-phosphate as a cofactor.

The protein resides in the cytoplasm. It catalyses the reaction (S)-4-amino-5-oxopentanoate = 5-aminolevulinate. Its pathway is porphyrin-containing compound metabolism; protoporphyrin-IX biosynthesis; 5-aminolevulinate from L-glutamyl-tRNA(Glu): step 2/2. The chain is Glutamate-1-semialdehyde 2,1-aminomutase from Vibrio vulnificus (strain CMCP6).